We begin with the raw amino-acid sequence, 604 residues long: MCGIVGVVGNRNATDILMQGLEKLEYRGYDSAGIFVANGDKLSLVKSVGRIADLRSKIGIDVAGSTGIGHTRWATHGQATVENAHPHTSASSRFVLVHNGVIENYLQMKEEYLAGHEFKGQTDTEIAVHLIGKFVEEDGLSVLEAFKNALSIIEGSYAFALIDTEDADTIYVAKNKSPLLIGLGEGYNMVCSDAMAMIRETSQFMEIHDKELVILTKDSVTVLDYDGNQLERDSYTAELDLSDIGKGTYPFYMLKEIDEQPTVMRKLISTYSDESGKMAIDPAIVKTIQEADRIYILAAGTSYNAGFASKAMIEQLTDTPVELGVASEWGYNMPLLSQKPMFILLSQSGETADSRQVLVKANQMGIPSLTVTNVPGSTLSREATYTMLLHAGPEIAVASTKAYTAQVAALAFLSKAVGEANGKKEALEFDLVHELSLVAQSIEATLSEKDLIASKVEKLLATTRNAFYIGRGNDYYVAMEASLKLKEISYIQCEGFAAGELKHGTISLIEDGTPVIGLISSSELVAAHTRGNIQEVAARGASVLTVVEEGLDREGDDIVVNKVHPYLATIGMVIPTQLIAYYASLQRGLDVDKPRNLAKAVTVE.

The active-site Nucleophile; for GATase activity is Cys-2. A Glutamine amidotransferase type-2 domain is found at 2–218; it reads CGIVGVVGNR…DKELVILTKD (217 aa). SIS domains follow at residues 284-423 and 456-594; these read IVKT…ANGK and VEKL…VDKP. Catalysis depends on Lys-599, which acts as the For Fru-6P isomerization activity.

As to quaternary structure, homodimer.

The protein resides in the cytoplasm. It carries out the reaction D-fructose 6-phosphate + L-glutamine = D-glucosamine 6-phosphate + L-glutamate. Catalyzes the first step in hexosamine metabolism, converting fructose-6P into glucosamine-6P using glutamine as a nitrogen source. This is Glutamine--fructose-6-phosphate aminotransferase [isomerizing] from Streptococcus pyogenes serotype M6 (strain ATCC BAA-946 / MGAS10394).